Consider the following 435-residue polypeptide: Light-independent protochlorophyllide reductase subunit N (435 aa).

Cys-23, Cys-48, and Cys-108 together coordinate [4Fe-4S] cluster.

The protein belongs to the BchN/ChlN family. Protochlorophyllide reductase is composed of three subunits; ChlL, ChlN and ChlB. Forms a heterotetramer of two ChlB and two ChlN subunits. The cofactor is [4Fe-4S] cluster.

Its subcellular location is the plastid. It is found in the chloroplast. The catalysed reaction is chlorophyllide a + oxidized 2[4Fe-4S]-[ferredoxin] + 2 ADP + 2 phosphate = protochlorophyllide a + reduced 2[4Fe-4S]-[ferredoxin] + 2 ATP + 2 H2O. It participates in porphyrin-containing compound metabolism; chlorophyll biosynthesis (light-independent). In terms of biological role, component of the dark-operative protochlorophyllide reductase (DPOR) that uses Mg-ATP and reduced ferredoxin to reduce ring D of protochlorophyllide (Pchlide) to form chlorophyllide a (Chlide). This reaction is light-independent. The NB-protein (ChlN-ChlB) is the catalytic component of the complex. The protein is Light-independent protochlorophyllide reductase subunit N of Auxenochlorella protothecoides (Green microalga).